Consider the following 218-residue polypeptide: Elongation factor Ts (218 aa).

The tract at residues 82–85 (TDFV) is involved in Mg(2+) ion dislocation from EF-Tu.

This sequence belongs to the EF-Ts family.

Its subcellular location is the cytoplasm. In terms of biological role, associates with the EF-Tu.GDP complex and induces the exchange of GDP to GTP. It remains bound to the aminoacyl-tRNA.EF-Tu.GTP complex up to the GTP hydrolysis stage on the ribosome. This Prochlorococcus marinus (strain MIT 9313) protein is Elongation factor Ts.